The sequence spans 88 residues: Small ribosomal subunit protein uS15 (88 aa).

This sequence belongs to the universal ribosomal protein uS15 family. Part of the 30S ribosomal subunit. Forms a bridge to the 50S subunit in the 70S ribosome, contacting the 23S rRNA.

Its function is as follows. One of the primary rRNA binding proteins, it binds directly to 16S rRNA where it helps nucleate assembly of the platform of the 30S subunit by binding and bridging several RNA helices of the 16S rRNA. Forms an intersubunit bridge (bridge B4) with the 23S rRNA of the 50S subunit in the ribosome. The protein is Small ribosomal subunit protein uS15 of Verminephrobacter eiseniae (strain EF01-2).